Here is a 521-residue protein sequence, read N- to C-terminus: Glucose-1-phosphate adenylyltransferase small subunit, chloroplastic/amyloplastic (521 aa).

The segment at 1–32 is disordered; it reads MAASIGALKSSPSSNNCINERRNDSTRAVSSR. A chloroplast-targeting transit peptide spans 1-72; sequence MAASIGALKS…RSPMIVSPKA (72 aa). Residue Lys268 participates in substrate binding. The interval 444–454 is allosteric regulation; sequence TDADRKLLAAK.

Belongs to the bacterial/plant glucose-1-phosphate adenylyltransferase family. As to quaternary structure, heterotetramer. As to expression, leaves and tubers.

The protein resides in the plastid. It is found in the chloroplast. It localises to the amyloplast. It carries out the reaction alpha-D-glucose 1-phosphate + ATP + H(+) = ADP-alpha-D-glucose + diphosphate. It participates in glycan biosynthesis; starch biosynthesis. Activated by 3'phosphoglycerate, inhibited by orthophosphate. Allosteric regulation. Its function is as follows. This protein plays a role in synthesis of starch. It catalyzes the synthesis of the activated glycosyl donor, ADP-glucose from Glc-1-P and ATP. The sequence is that of Glucose-1-phosphate adenylyltransferase small subunit, chloroplastic/amyloplastic from Solanum tuberosum (Potato).